Consider the following 226-residue polypeptide: Orotate phosphoribosyltransferase 1 (226 aa).

K30 is a 5-phospho-alpha-D-ribose 1-diphosphate binding site. An orotate-binding site is contributed by 38–39; it reads FF. 5-phospho-alpha-D-ribose 1-diphosphate is bound by residues 76–77, R106, K107, K110, H112, and 132–140; these read YK and DDVMTAGTA. The orotate site is built by T136 and R164. Residues S213 and S225 each carry the phosphoserine modification.

It belongs to the purine/pyrimidine phosphoribosyltransferase family. PyrE subfamily. As to quaternary structure, homodimer.

It catalyses the reaction orotidine 5'-phosphate + diphosphate = orotate + 5-phospho-alpha-D-ribose 1-diphosphate. It participates in pyrimidine metabolism; UMP biosynthesis via de novo pathway; UMP from orotate: step 1/2. Catalyzes the transfer of a ribosyl phosphate group from 5-phosphoribose 1-diphosphate to orotate, leading to the formation of orotidine monophosphate (OMP). This chain is Orotate phosphoribosyltransferase 1 (URA5), found in Saccharomyces cerevisiae (strain ATCC 204508 / S288c) (Baker's yeast).